The sequence spans 154 residues: Transcriptional repressor NrdR (154 aa).

The segment at 3–34 (CPTCKYNGTRVVDSRPADDGNSIRRRRECEKC) is a zinc-finger region. One can recognise an ATP-cone domain in the interval 49–139 (LIVVKKDGAR…VYRQFKDISV (91 aa)).

This sequence belongs to the NrdR family. It depends on Zn(2+) as a cofactor.

In terms of biological role, negatively regulates transcription of bacterial ribonucleotide reductase nrd genes and operons by binding to NrdR-boxes. The chain is Transcriptional repressor NrdR from Listeria welshimeri serovar 6b (strain ATCC 35897 / DSM 20650 / CCUG 15529 / CIP 8149 / NCTC 11857 / SLCC 5334 / V8).